The following is a 382-amino-acid chain: Alkane 1-monooxygenase 1 (382 aa).

The next 4 helical transmembrane spans lie at 10-30, 43-63, 90-110, and 121-141; these read MLAI…SMPF, FWAF…DMLF, LATV…FVAF, and WILS…HELI. Positions 138 and 142 each coordinate Fe cation. A helical transmembrane segment spans residues 146–166; sequence ALEQAAGGILLAAVCYAGFKV. Fe cation is bound by residues His-168, His-172, and His-173. The chain crosses the membrane as a helical span at residues 236–256; that stretch reads LALLVGFGWAFGWLGMVFFLG. Fe cation-binding residues include His-312, His-315, and His-316.

The protein belongs to the fatty acid desaturase type 1 family. AlkB subfamily. The cofactor is Fe(3+).

It localises to the cell inner membrane. It carries out the reaction octane + 2 reduced [rubredoxin] + O2 + 2 H(+) = 2 oxidized [rubredoxin] + octan-1-ol + H2O. It participates in hydrocarbon metabolism; alkane degradation. Functionally, catalyzes the hydroxylation of n-alkanes in the presence of a NADH-rubredoxin reductase and rubredoxin. It preferably hydroxylases C16-C24 hydrocarbons. The protein is Alkane 1-monooxygenase 1 (alkB1) of Pseudomonas aeruginosa (strain ATCC 15692 / DSM 22644 / CIP 104116 / JCM 14847 / LMG 12228 / 1C / PRS 101 / PAO1).